A 228-amino-acid chain; its full sequence is 7-cyano-7-deazaguanine synthase (228 aa).

8-18 (LSGGMDSATTL) lines the ATP pocket. Zn(2+)-binding residues include cysteine 188, cysteine 198, cysteine 201, and cysteine 204.

It belongs to the QueC family. The cofactor is Zn(2+).

The enzyme catalyses 7-carboxy-7-deazaguanine + NH4(+) + ATP = 7-cyano-7-deazaguanine + ADP + phosphate + H2O + H(+). Its pathway is purine metabolism; 7-cyano-7-deazaguanine biosynthesis. Its function is as follows. Catalyzes the ATP-dependent conversion of 7-carboxy-7-deazaguanine (CDG) to 7-cyano-7-deazaguanine (preQ(0)). In Nitrosomonas europaea (strain ATCC 19718 / CIP 103999 / KCTC 2705 / NBRC 14298), this protein is 7-cyano-7-deazaguanine synthase.